We begin with the raw amino-acid sequence, 163 residues long: Glutathione peroxidase 1 (163 aa).

Residue Cys-36 is part of the active site.

The protein belongs to the glutathione peroxidase family.

It is found in the cytoplasm. The enzyme catalyses 2 glutathione + H2O2 = glutathione disulfide + 2 H2O. May constitute a glutathione peroxidase-like protective system against oxidative stresses. This chain is Glutathione peroxidase 1 (gpx-1), found in Caenorhabditis elegans.